The sequence spans 482 residues: BTB/POZ domain-containing protein 6-B (482 aa).

Residues A80 to A150 enclose the BTB domain.

In terms of assembly, interacts with cul3. Interacts (via BTB domain) with zbtb16/plzf. In terms of tissue distribution, in embryos, expressed in the cranial ganglia.

Its subcellular location is the cytoplasm. The protein localises to the nucleus. Functionally, adapter protein for the cul3 E3 ubiquitin-protein ligase complex. Promotes the export of zbtb16/plzf from the nucleus to the cytoplasm and targets zbtb16/plzf for ubiquitination and degradation. Up-regulates neurog1 expression and antagonizes zbtb16/plzf, to promote neurogenesis. The chain is BTB/POZ domain-containing protein 6-B (btbd6b) from Danio rerio (Zebrafish).